The chain runs to 347 residues: Protein YIPF1 homolog (347 aa).

Residues 1–115 (MSNYNNKHHD…FSDNVPLNTN (115 aa)) are disordered. Over 1–166 (MSNYNNKHHD…FFNLIRENPD (166 aa)) the chain is Cytoplasmic. A compositionally biased stretch (polar residues) spans 34–47 (NLFPNTNIDYNDYT). 2 stretches are compositionally biased toward low complexity: residues 48–67 (QNRG…LQFQ) and 76–104 (NSNT…SSNN). Polar residues predominate over residues 105–115 (KFSDNVPLNTN). A helical transmembrane segment spans residues 167–187 (LYGPFWVLTSLVFIVAVTSNL). Residues 188–207 (NEYFHSSDHKSWEVDIQKIV) are Lumenal-facing. Residues 208–228 (YSAITIYGYSFVIPLILWGIF) form a helical membrane-spanning segment. Residues 229–232 (KWMN) lie on the Cytoplasmic side of the membrane. Residues 233–253 (LGLRLLDMLCIYGYTLFIFVP) traverse the membrane as a helical segment. Residues 254–255 (AS) are Lumenal-facing. Residues 256–276 (ILCVIPLQLVQWIIVAIASIV) traverse the membrane as a helical segment. The Cytoplasmic segment spans residues 277 to 296 (SGLFLVTNIFTPLKEDFTKR). The chain crosses the membrane as a helical span at residues 297–317 (GLIICAVIGALHIGLALVLKL). At 318-347 (YFFANSTENFTISDSSSTPTPTPTNTTKLL) the chain is on the lumenal side. Residues N322, N326, and N342 are each glycosylated (N-linked (GlcNAc...) asparagine).

The protein belongs to the YIP1 family.

It localises to the golgi apparatus. The protein localises to the cis-Golgi network membrane. The protein resides in the trans-Golgi network membrane. It is found in the late endosome membrane. This chain is Protein YIPF1 homolog (yipf1), found in Dictyostelium discoideum (Social amoeba).